The chain runs to 624 residues: MNLEQLYDVIVVGGGHAGTEAALAAARLGVKTLLLTHNIDLLGQMSCNPAIGGIGKGHLVKEIDALDGAMAKAADQAGIQFRILNASKGPAVRATRAQADRVLYRKAIRTQLQSQANLTIFQQAVDDLKIEGGLVTGVVTQMGLTLKARAVVLTVGTFLGGKIHVGMNQYAGGRAGDPPSIALSKSLRDLDLPVGRLKTGTPPRIDRRTIDFSQMVEQPGDTPVPVFSYLGTASDHPQQVSCHITHTTEATHDIIRNNLDKSPMYAGVIEGVGPRYCPSIEDKIVRFADKTSHQIFVEPEGLTTEEIYPNGISTSLPFEVQVQFVRTIKGFENAHITRPGYAIEYDYFDPRGLTSFLQTKAIPNLFFAGQINGTTGYEEAAAQGIIAGMNAALQIKGQDLWCPRRDEAYIGVLIDDLITCGTQEPYRMFTSRAEYRLLLREDNADLRLTEKGRQLGLVGDERWDSFSKKREAIESTQALLHNSWVRVHHNDLFKEALLNPMQHDCRAAEFLKRPEINYRHLLMMDDLNLPELPQEITEQIEIQNKYAGYIDRQQQEIEKLRKHENTMLPETLDYNDVVGLSSEVIQKLNRIKPTSLAQAGRISGVTPAALSLLLVHLKKSRLPV.

Residues 13 to 18 (GGGHAG), valine 125, and serine 180 each bind FAD. Position 273-287 (273-287 (GPRYCPSIEDKIVRF)) interacts with NAD(+). An FAD-binding site is contributed by glutamine 370.

Belongs to the MnmG family. Homodimer. Heterotetramer of two MnmE and two MnmG subunits. FAD serves as cofactor.

It is found in the cytoplasm. Its function is as follows. NAD-binding protein involved in the addition of a carboxymethylaminomethyl (cmnm) group at the wobble position (U34) of certain tRNAs, forming tRNA-cmnm(5)s(2)U34. The chain is tRNA uridine 5-carboxymethylaminomethyl modification enzyme MnmG from Legionella pneumophila (strain Lens).